A 92-amino-acid chain; its full sequence is Large ribosomal subunit protein eL43y (92 aa).

A C4-type zinc finger spans residues 39–60 (CEFCGKYGVKRKAVGIWGCKDC).

The protein belongs to the eukaryotic ribosomal protein eL43 family.

This Arabidopsis thaliana (Mouse-ear cress) protein is Large ribosomal subunit protein eL43y (RPL37AC).